The sequence spans 76 residues: ATP synthase subunit c (76 aa).

A run of 2 helical transmembrane segments spans residues 5 to 25 (GIIA…GIGI) and 54 to 74 (AALA…LVFL).

It belongs to the ATPase C chain family. F-type ATPases have 2 components, F(1) - the catalytic core - and F(0) - the membrane proton channel. F(1) has five subunits: alpha(3), beta(3), gamma(1), delta(1), epsilon(1). F(0) has three main subunits: a(1), b(2) and c(10-14). The alpha and beta chains form an alternating ring which encloses part of the gamma chain. F(1) is attached to F(0) by a central stalk formed by the gamma and epsilon chains, while a peripheral stalk is formed by the delta and b chains.

It is found in the cell membrane. In terms of biological role, f(1)F(0) ATP synthase produces ATP from ADP in the presence of a proton or sodium gradient. F-type ATPases consist of two structural domains, F(1) containing the extramembraneous catalytic core and F(0) containing the membrane proton channel, linked together by a central stalk and a peripheral stalk. During catalysis, ATP synthesis in the catalytic domain of F(1) is coupled via a rotary mechanism of the central stalk subunits to proton translocation. Its function is as follows. Key component of the F(0) channel; it plays a direct role in translocation across the membrane. A homomeric c-ring of between 10-14 subunits forms the central stalk rotor element with the F(1) delta and epsilon subunits. The polypeptide is ATP synthase subunit c (Ruminiclostridium cellulolyticum (strain ATCC 35319 / DSM 5812 / JCM 6584 / H10) (Clostridium cellulolyticum)).